Consider the following 467-residue polypeptide: Variant surface glycoprotein 7 (467 aa).

Polar residues predominate over residues 77-87; that stretch reads TIAAGATNTKL. Residues 77–133 form a disordered region; sequence TIAAGATNTKLSGHHPNQGRRGRRRSSSARPNNSKGNSPSKRAGGAVRGETPASGRL. Over residues 93–103 the composition is skewed to basic residues; the sequence is NQGRRGRRRSS. The segment covering 107–116 has biased composition (polar residues); it reads PNNSKGNSPS. N-linked (GlcNAc...) asparagine glycosylation is found at Asn-108 and Asn-252. The tract at residues 382–407 is disordered; it reads AEKVENPRSQGNPETAENKKEGGNTA. Asn-416 carries an N-linked (GlcNAc...) asparagine glycan. A lipid anchor (GPI-anchor amidated aspartate) is attached at Asp-444. A propeptide spans 445–467 (removed in mature form); sequence SSFLLSKQFALSVVSAAFAALLF.

The protein resides in the cell membrane. Functionally, VSG forms a coat on the surface of the parasite. The trypanosome evades the immune response of the host by expressing a series of antigenically distinct VSGs from an estimated 1000 VSG genes. This is Variant surface glycoprotein 7 from Trypanosoma brucei rhodesiense.